The primary structure comprises 184 residues: ATP synthase subunit b (184 aa).

The chain crosses the membrane as a helical span at residues 24–44 (ILVVVVGFALLMFIVIKFIVP).

The protein belongs to the ATPase B chain family. In terms of assembly, F-type ATPases have 2 components, F(1) - the catalytic core - and F(0) - the membrane proton channel. F(1) has five subunits: alpha(3), beta(3), gamma(1), delta(1), epsilon(1). F(0) has three main subunits: a(1), b(2) and c(10-14). The alpha and beta chains form an alternating ring which encloses part of the gamma chain. F(1) is attached to F(0) by a central stalk formed by the gamma and epsilon chains, while a peripheral stalk is formed by the delta and b chains.

It is found in the cell membrane. F(1)F(0) ATP synthase produces ATP from ADP in the presence of a proton or sodium gradient. F-type ATPases consist of two structural domains, F(1) containing the extramembraneous catalytic core and F(0) containing the membrane proton channel, linked together by a central stalk and a peripheral stalk. During catalysis, ATP synthesis in the catalytic domain of F(1) is coupled via a rotary mechanism of the central stalk subunits to proton translocation. Its function is as follows. Component of the F(0) channel, it forms part of the peripheral stalk, linking F(1) to F(0). The polypeptide is ATP synthase subunit b (atpF) (Micrococcus luteus (strain ATCC 4698 / DSM 20030 / JCM 1464 / CCM 169 / CCUG 5858 / IAM 1056 / NBRC 3333 / NCIMB 9278 / NCTC 2665 / VKM Ac-2230) (Micrococcus lysodeikticus)).